The following is a 122-amino-acid chain: NADH-quinone oxidoreductase subunit A (122 aa).

The next 3 membrane-spanning stretches (helical) occupy residues 10–30 (MIVLIFLLLGILLPVVALTLG), 66–86 (IFALLFVIFDVETLFLYPWAV), and 91–111 (LGLFALIEMLIFVVMLLVGLA).

Belongs to the complex I subunit 3 family. NDH-1 is composed of 14 different subunits. Subunits NuoA, H, J, K, L, M, N constitute the membrane sector of the complex.

The protein localises to the cell membrane. It catalyses the reaction a quinone + NADH + 5 H(+)(in) = a quinol + NAD(+) + 4 H(+)(out). In terms of biological role, NDH-1 shuttles electrons from NADH, via FMN and iron-sulfur (Fe-S) centers, to quinones in the respiratory chain. The immediate electron acceptor for the enzyme in this species is believed to be a menaquinone. Couples the redox reaction to proton translocation (for every two electrons transferred, four hydrogen ions are translocated across the cytoplasmic membrane), and thus conserves the redox energy in a proton gradient. The polypeptide is NADH-quinone oxidoreductase subunit A (Bacillus cereus (strain ATCC 14579 / DSM 31 / CCUG 7414 / JCM 2152 / NBRC 15305 / NCIMB 9373 / NCTC 2599 / NRRL B-3711)).